A 209-amino-acid chain; its full sequence is Putative AgrB-like protein (209 aa).

Transmembrane regions (helical) follow at residues 49–71 (ILFL…AAFG), 82–102 (AKNS…GAYL), 105–125 (YLLF…LLLF), 149–169 (QAVL…DELI), and 173–193 (ISLS…KVLG).

Belongs to the AgrB family.

The protein resides in the cell membrane. Its function is as follows. May be involved in the proteolytic processing of a quorum sensing system signal molecule precursor. The polypeptide is Putative AgrB-like protein (Clostridium acetobutylicum (strain ATCC 824 / DSM 792 / JCM 1419 / IAM 19013 / LMG 5710 / NBRC 13948 / NRRL B-527 / VKM B-1787 / 2291 / W)).